Here is a 319-residue protein sequence, read N- to C-terminus: Glutathione synthetase (319 aa).

The 187-residue stretch at 125–311 folds into the ATP-grasp domain; the sequence is EKLFATLFPQ…IGGLLMDAIE (187 aa). 151–208 is a binding site for ATP; it reads FAEQQGDVILKPLDGMGGASIFRHRAGDPNLSVILETLTAHGTQQIMAQGYLPAIKDG. E282 and N284 together coordinate Mg(2+).

It belongs to the prokaryotic GSH synthase family. Mg(2+) is required as a cofactor. The cofactor is Mn(2+).

The catalysed reaction is gamma-L-glutamyl-L-cysteine + glycine + ATP = glutathione + ADP + phosphate + H(+). Its pathway is sulfur metabolism; glutathione biosynthesis; glutathione from L-cysteine and L-glutamate: step 2/2. In Pseudomonas syringae pv. tomato (strain ATCC BAA-871 / DC3000), this protein is Glutathione synthetase.